Here is a 2192-residue protein sequence, read N- to C-terminus: BEACH domain-containing protein lvsE (2192 aa).

Disordered stretches follow at residues 948-969 (STSL…TSTG), 996-1065 (TTTT…DEPE), 1160-1303 (NESQ…NNLS), and 1343-1363 (DENG…SSSN). Residues 996 to 1049 (TTTTTTTTTTTTTTSTTSNTGNDSPLSIESPISSPVLIENTTNTTNTTTTNTTN) show a composition bias toward low complexity. Residues 1171–1187 (NIDNLNPNTGLPYNKST) show a composition bias toward polar residues. Residues 1188–1231 (NNLSNVNNVNNNNNNNSNNINVSGNNTIGPSSSKSPLRNSRSMS) are compositionally biased toward low complexity. The span at 1232–1243 (IGSSATKSPSRQ) shows a compositional bias: polar residues. Composition is skewed to low complexity over residues 1253 to 1303 (NNNS…NNLS) and 1350 to 1363 (SSPN…SSSN). Residues 1366–1491 (IEEEKFIGSW…ESIQIFNKIV (126 aa)) form the BEACH-type PH domain. A BEACH domain is found at 1504–1795 (DHPSKIIKKS…QLFSKPHPIR (292 aa)). Over residues 1823–1849 (GTINSSFSSTSTSTSTSSPPPSTLNSP) the composition is skewed to low complexity. The tract at residues 1823 to 1851 (GTINSSFSSTSTSTSTSSPPPSTLNSPQG) is disordered. 3 WD repeats span residues 1973-2012 (FHHD…IKDS), 2022-2061 (SHDE…YQRS), and 2156-2192 (DSPA…VKDL).

This is BEACH domain-containing protein lvsE (lvsE) from Dictyostelium discoideum (Social amoeba).